A 667-amino-acid polypeptide reads, in one-letter code: Coiled-coil domain-containing protein 154 (667 aa).

4 coiled-coil regions span residues 76–182 (VVEL…QEAG), 215–302 (RRVD…GQHE), 384–410 (LLRE…SGHL), and 457–521 (LRGV…KEDN).

Its subcellular location is the early endosome. In Homo sapiens (Human), this protein is Coiled-coil domain-containing protein 154.